The sequence spans 275 residues: Dermonecrotic toxin LhSicTox-alphaVI1i (275 aa).

H5 is a catalytic residue. Positions 25 and 27 each coordinate Mg(2+). H41 acts as the Nucleophile in catalysis. 2 disulfide bridges follow: C45–C51 and C47–C192. D85 contributes to the Mg(2+) binding site.

Belongs to the arthropod phospholipase D family. Class II subfamily. Requires Mg(2+) as cofactor. In terms of tissue distribution, expressed by the venom gland.

It localises to the secreted. The catalysed reaction is an N-(acyl)-sphingosylphosphocholine = an N-(acyl)-sphingosyl-1,3-cyclic phosphate + choline. It catalyses the reaction an N-(acyl)-sphingosylphosphoethanolamine = an N-(acyl)-sphingosyl-1,3-cyclic phosphate + ethanolamine. It carries out the reaction a 1-acyl-sn-glycero-3-phosphocholine = a 1-acyl-sn-glycero-2,3-cyclic phosphate + choline. The enzyme catalyses a 1-acyl-sn-glycero-3-phosphoethanolamine = a 1-acyl-sn-glycero-2,3-cyclic phosphate + ethanolamine. Dermonecrotic toxins cleave the phosphodiester linkage between the phosphate and headgroup of certain phospholipids (sphingolipid and lysolipid substrates), forming an alcohol (often choline) and a cyclic phosphate. This toxin acts on sphingomyelin (SM). It may also act on ceramide phosphoethanolamine (CPE), lysophosphatidylcholine (LPC) and lysophosphatidylethanolamine (LPE), but not on lysophosphatidylserine (LPS), and lysophosphatidylglycerol (LPG). It acts by transphosphatidylation, releasing exclusively cyclic phosphate products as second products. Induces dermonecrosis, hemolysis, increased vascular permeability, edema, inflammatory response, and platelet aggregation. This chain is Dermonecrotic toxin LhSicTox-alphaVI1i, found in Loxosceles hirsuta (Recluse spider).